A 627-amino-acid polypeptide reads, in one-letter code: tRNA uridine 5-carboxymethylaminomethyl modification enzyme MnmG (627 aa).

FAD-binding positions include glycine 13–glycine 18, valine 125, and serine 180. Glycine 274–phenylalanine 288 contacts NAD(+). Glutamine 371 is an FAD binding site.

The protein belongs to the MnmG family. As to quaternary structure, homodimer. Heterotetramer of two MnmE and two MnmG subunits. FAD serves as cofactor.

It is found in the cytoplasm. NAD-binding protein involved in the addition of a carboxymethylaminomethyl (cmnm) group at the wobble position (U34) of certain tRNAs, forming tRNA-cmnm(5)s(2)U34. The chain is tRNA uridine 5-carboxymethylaminomethyl modification enzyme MnmG from Francisella philomiragia subsp. philomiragia (strain ATCC 25017 / CCUG 19701 / FSC 153 / O#319-036).